The sequence spans 459 residues: GTPase Der (459 aa).

EngA-type G domains are found at residues 3–167 (FTLA…PEPV) and 188–363 (IRVA…AVWN). GTP contacts are provided by residues 9 to 16 (GRPNVGKS), 56 to 60 (DTAGL), 119 to 122 (NKSE), 194 to 201 (GRPNAGKS), 241 to 245 (DTAGL), and 306 to 309 (NKWD). The 85-residue stretch at 364–448 (RRVPTAALNR…PVRITLREKA (85 aa)) folds into the KH-like domain.

The protein belongs to the TRAFAC class TrmE-Era-EngA-EngB-Septin-like GTPase superfamily. EngA (Der) GTPase family. In terms of assembly, associates with the 50S ribosomal subunit.

Functionally, GTPase that plays an essential role in the late steps of ribosome biogenesis. In Rhodopseudomonas palustris (strain TIE-1), this protein is GTPase Der.